The following is a 216-amino-acid chain: Glutathione S-transferase D5 (216 aa).

The GST N-terminal domain maps to 1–80; it reads MDFYYSPRGS…YLVEKYGKDD (80 aa). Residues 50–52 and 64–66 contribute to the glutathione site; these read HTI and ESR. Positions 86-207 constitute a GST C-terminal domain; it reads DPKKQALVNQ…KGAVELKGVF (122 aa).

The protein belongs to the GST superfamily. Delta family. Homodimer.

The enzyme catalyses RX + glutathione = an S-substituted glutathione + a halide anion + H(+). Conjugation of reduced glutathione to a wide number of exogenous and endogenous hydrophobic electrophiles. May be involved in detoxification. This chain is Glutathione S-transferase D5, found in Drosophila melanogaster (Fruit fly).